Reading from the N-terminus, the 511-residue chain is V-type proton ATPase subunit B, brain isoform (511 aa).

An ATP-binding site is contributed by arginine 400.

Belongs to the ATPase alpha/beta chains family. V-ATPase is a heteromultimeric enzyme made up of two complexes: the ATP-hydrolytic V1 complex and the proton translocation V0 complex. The V1 complex consists of three catalytic AB heterodimers that form a heterohexamer, three peripheral stalks each consisting of EG heterodimers, one central rotor including subunits D and F, and the regulatory subunits C and H. The proton translocation complex V0 consists of the proton transport subunit a, a ring of proteolipid subunits c9c'', rotary subunit d, subunits e and f, and the accessory subunits ATP6AP1/Ac45 and ATP6AP2/PRR. As to expression, kidney; localizes to early distal nephron, encompassing thick ascending limbs and distal convoluted tubules (at protein level).

Its subcellular location is the apical cell membrane. It localises to the melanosome. It is found in the cytoplasm. The protein resides in the cytoplasmic vesicle. The protein localises to the secretory vesicle. Its subcellular location is the synaptic vesicle membrane. It localises to the clathrin-coated vesicle membrane. Non-catalytic subunit of the V1 complex of vacuolar(H+)-ATPase (V-ATPase), a multisubunit enzyme composed of a peripheral complex (V1) that hydrolyzes ATP and a membrane integral complex (V0) that translocates protons. V-ATPase is responsible for acidifying and maintaining the pH of intracellular compartments and in some cell types, is targeted to the plasma membrane, where it is responsible for acidifying the extracellular environment. In renal intercalated cells, can partially compensate the lack of ATP6V1B1 and mediate secretion of protons (H+) into the urine under base-line conditions but not in conditions of acid load. This is V-type proton ATPase subunit B, brain isoform (ATP6V1B2) from Homo sapiens (Human).